Reading from the N-terminus, the 223-residue chain is Ethylene-inducing xylanase (223 aa).

An N-terminal signal peptide occupies residues 1–19 (MVSFTTLLAGFVAVTGVLS). In terms of domain architecture, GH11 spans 34-223 (QTIGPGTGFN…SSGNANINVS (190 aa)). Residue asparagine 94 is glycosylated (N-linked (GlcNAc...) asparagine). The active-site Nucleophile is glutamate 119. Catalysis depends on glutamate 210, which acts as the Proton donor.

This sequence belongs to the glycosyl hydrolase 11 (cellulase G) family. In terms of assembly, interactc with tomato LeEix2 receptor to trigger its internalization.

The protein localises to the secreted. It catalyses the reaction Endohydrolysis of (1-&gt;4)-beta-D-xylosidic linkages in xylans.. It functions in the pathway glycan degradation; xylan degradation. Its function is as follows. Endo-1,4-beta-xylanase involved in the hydrolysis of xylan, a major structural heterogeneous polysaccharide found in plant biomass representing the second most abundant polysaccharide in the biosphere, after cellulose. Acts as an elicitor of plant defense responses in hosts such as tobacco (Nicotiana tabacum) or tomato (Solanum lycopersicum). Induces the production of ethylene and leads alterations in membrane function with rapid efflux of potassium, uptake of calcium, alkalization of the medium, increased leakage of cellular components and necrosis in plant hosts. EIX is translocated through the xylem of the host plant to the leaf mesophyll, leading to host response to pathogen-derived extracellular proteins in tissues distant from the invading pathogen. Greatly enhances the expression of two calcineurin B-like proteins-interacting protein kinases (CIPKs) family members, OsCIPK14 and OsCIPK15, in rice cultured cells. In tomato, triggers the defense response via binding to and subsequent internalization of the LeEix2 receptor. The chain is Ethylene-inducing xylanase from Hypocrea rufa (Trichoderma viride).